Reading from the N-terminus, the 369-residue chain is Glutamate 5-kinase (369 aa).

Residue Lys-14 participates in ATP binding. Substrate is bound by residues Ser-56, Asp-143, and Asn-155. ATP contacts are provided by residues 175-176 (SD) and 215-221 (TGGMASK). One can recognise a PUA domain in the interval 277–351 (AGKIRLDDGA…GMQTQDLPDG (75 aa)).

It belongs to the glutamate 5-kinase family.

The protein resides in the cytoplasm. The enzyme catalyses L-glutamate + ATP = L-glutamyl 5-phosphate + ADP. Its pathway is amino-acid biosynthesis; L-proline biosynthesis; L-glutamate 5-semialdehyde from L-glutamate: step 1/2. Functionally, catalyzes the transfer of a phosphate group to glutamate to form L-glutamate 5-phosphate. The sequence is that of Glutamate 5-kinase from Corynebacterium glutamicum (strain ATCC 13032 / DSM 20300 / JCM 1318 / BCRC 11384 / CCUG 27702 / LMG 3730 / NBRC 12168 / NCIMB 10025 / NRRL B-2784 / 534).